Reading from the N-terminus, the 41-residue chain is Bacteriocin bavaricin-A (41 aa).

It belongs to the bacteriocin class IIA/YGNGV family.

Its subcellular location is the secreted. Its function is as follows. This heat stable bacteriocin shows activity against species of Lactobacillus, Listeria monocytogenes, Pediococcus, Enterococcus, Leuconostoc and Lactococcus. The protein is Bacteriocin bavaricin-A of Latilactobacillus sakei (Lactobacillus sakei).